We begin with the raw amino-acid sequence, 236 residues long: MRLSAQLTNTKLADEEVPELASVPDGVSRWTGADLDRLRSAARRGGVGAEQQDLEQKLCRTIDILGARSQKTQGINAVLTSVARLRESNTFRLYLLTQNHRGVGILKMGVKKLFVTHPVTCGLVEVDPLCVLDFYVDESCQRQGYGKQLYAHMLDAEHVSRPELLAIDRPSDKLLGFMKKHYGLTAYTPQVNKFVVFHGFFGHTTVSERGKLLRTTSPTGAAAAATGTKAKNEMPG.

Residues 21 to 201 (ASVPDGVSRW…NKFVVFHGFF (181 aa)) enclose the N-acetyltransferase domain. Acetyl-CoA-binding positions include 134–147 (FYVD…GYGK) and 171–180 (SDKLLGFMKK). Residues 217–236 (SPTGAAAAATGTKAKNEMPG) form a disordered region. A compositionally biased stretch (low complexity) spans 219 to 229 (TGAAAAATGTK).

The protein belongs to the acetyltransferase ATAT1 family.

The enzyme catalyses L-lysyl-[alpha-tubulin] + acetyl-CoA = N(6)-acetyl-L-lysyl-[alpha-tubulin] + CoA + H(+). Functionally, specifically acetylates 'Lys-40' in alpha-tubulin on the lumenal side of microtubules. Promotes microtubule destabilization and accelerates microtubule dynamics; this activity may be independent of acetylation activity. Acetylates alpha-tubulin with a slow enzymatic rate, due to a catalytic site that is not optimized for acetyl transfer. Enters the microtubule through each end and diffuses quickly throughout the lumen of microtubules. Acetylates only long/old microtubules because of its slow acetylation rate since it does not have time to act on dynamically unstable microtubules before the enzyme is released. This chain is Alpha-tubulin N-acetyltransferase, found in Leishmania braziliensis.